The primary structure comprises 831 residues: Periplasmic nitrate reductase (831 aa).

The tat-type signal signal peptide spans 1–29; that stretch reads MTLSRRDFIKQTAVAATASVAGVTLPAGA. Positions 41 to 97 constitute a 4Fe-4S Mo/W bis-MGD-type domain; that stretch reads LKWSKAPCRFCGTGCGVTVAVRDNKVVATNGDPQAEVNKGLNCVKGYFLSKIMYGQD. Residues C48, C51, C55, and C83 each contribute to the [4Fe-4S] cluster site. Residues K85, Q152, N177, C181, 214–221, 245–249, 264–266, M375, Q379, N485, 511–512, K534, D561, and 721–730 each bind Mo-bis(molybdopterin guanine dinucleotide); these read WGSNMAEM, STFTH, QTD, SD, and TGRVLEHWHS. Residue W797 participates in substrate binding. Mo-bis(molybdopterin guanine dinucleotide)-binding residues include N805 and K822.

The protein belongs to the prokaryotic molybdopterin-containing oxidoreductase family. NasA/NapA/NarB subfamily. Component of the periplasmic nitrate reductase NapAB complex composed of NapA and NapB. [4Fe-4S] cluster serves as cofactor. It depends on Mo-bis(molybdopterin guanine dinucleotide) as a cofactor. Predicted to be exported by the Tat system. The position of the signal peptide cleavage has not been experimentally proven.

Its subcellular location is the periplasm. The catalysed reaction is 2 Fe(II)-[cytochrome] + nitrate + 2 H(+) = 2 Fe(III)-[cytochrome] + nitrite + H2O. Catalytic subunit of the periplasmic nitrate reductase complex NapAB. Receives electrons from NapB and catalyzes the reduction of nitrate to nitrite. The sequence is that of Periplasmic nitrate reductase from Cupriavidus taiwanensis (strain DSM 17343 / BCRC 17206 / CCUG 44338 / CIP 107171 / LMG 19424 / R1) (Ralstonia taiwanensis (strain LMG 19424)).